Consider the following 1021-residue polypeptide: Probable LRR receptor-like serine/threonine-protein kinase RFK1 (1021 aa).

Residues 1 to 39 (MISLYQILAEKKKKKKNDLNIFAFSVFAIICFKFYSVNA) form the signal peptide. Over 41–625 (KLPQQEVDAL…PKTGMSPGAY (585 aa)) the chain is Extracellular. Residue Asn96 is glycosylated (N-linked (GlcNAc...) asparagine). 2 LRR repeats span residues 99 to 122 (DCHV…IVKL) and 123 to 146 (PYLR…WASS). N-linked (GlcNAc...) asparagine glycans are attached at residues Asn136, Asn147, and Asn168. LRR repeat units lie at residues 148–168 (LTFI…EFGN), 169–192 (SSLT…LGNL), 193–216 (VHLK…LARL), 218–240 (NMTD…IQNW), and 241–266 (KQLE…VLSN). The N-linked (GlcNAc...) asparagine glycan is linked to Asn218. Asn287 and Asn300 each carry an N-linked (GlcNAc...) asparagine glycan. 4 LRR repeats span residues 288–312 (VTGL…LSHL), 313–336 (KELE…AQAE), 338–359 (LRFI…LLRD), and 361–381 (ITVD…RACR). Residues Asn486 and Asn512 are each glycosylated (N-linked (GlcNAc...) asparagine). Residues 626–646 (IAIGIGAPCLIIFILGFLWIC) form a helical membrane-spanning segment. Topologically, residues 647–1021 (GCLPRCGRQR…QERKKEESRP (375 aa)) are cytoplasmic. Position 670 is a phosphothreonine (Thr670). The Protein kinase domain maps to 681 to 956 (FNPTNKIGEG…EVVAMLEGLY (276 aa)). Residues 687-695 (IGEGGFGAV) and Lys709 each bind ATP. Tyr754 carries the phosphotyrosine modification. Asp807 acts as the Proton acceptor in catalysis. At Ser840 the chain carries Phosphoserine. A phosphothreonine mark is found at Thr841 and Thr846. Phosphotyrosine is present on Tyr854. Residues 985-1021 (ENNSKTQCSVKSYPSSSSTSSGAGQAVQERKKEESRP) form a disordered region. The span at 993–1005 (SVKSYPSSSSTSS) shows a compositional bias: low complexity. A compositionally biased stretch (basic and acidic residues) spans 1012–1021 (QERKKEESRP).

It belongs to the protein kinase superfamily. Ser/Thr protein kinase family. Mostly expressed in flower buds, especially in stamens.

It is found in the membrane. The enzyme catalyses L-seryl-[protein] + ATP = O-phospho-L-seryl-[protein] + ADP + H(+). It catalyses the reaction L-threonyl-[protein] + ATP = O-phospho-L-threonyl-[protein] + ADP + H(+). The sequence is that of Probable LRR receptor-like serine/threonine-protein kinase RFK1 (RKF1) from Arabidopsis thaliana (Mouse-ear cress).